The following is a 367-amino-acid chain: tRNA/tmRNA (uracil-C(5))-methyltransferase (367 aa).

The S-adenosyl-L-methionine site is built by Gln-190, Tyr-218, Asn-223, Glu-239, and Asp-299. The active-site Nucleophile is Cys-324. The active-site Proton acceptor is the Glu-358.

It belongs to the class I-like SAM-binding methyltransferase superfamily. RNA M5U methyltransferase family. TrmA subfamily.

The enzyme catalyses uridine(54) in tRNA + S-adenosyl-L-methionine = 5-methyluridine(54) in tRNA + S-adenosyl-L-homocysteine + H(+). It carries out the reaction uridine(341) in tmRNA + S-adenosyl-L-methionine = 5-methyluridine(341) in tmRNA + S-adenosyl-L-homocysteine + H(+). Functionally, dual-specificity methyltransferase that catalyzes the formation of 5-methyluridine at position 54 (m5U54) in all tRNAs, and that of position 341 (m5U341) in tmRNA (transfer-mRNA). The protein is tRNA/tmRNA (uracil-C(5))-methyltransferase of Serratia proteamaculans (strain 568).